The following is a 231-amino-acid chain: ATP-dependent dethiobiotin synthetase BioD 2 (231 aa).

Residue 13–18 (SVGKTV) participates in ATP binding. Residue Thr-17 coordinates Mg(2+). Lys-38 is an active-site residue. Residues Asp-55, 112–115 (EGTG), 172–173 (NR), 201–203 (PYL), and Gln-208 each bind ATP. The Mg(2+) site is built by Asp-55 and Glu-112.

Belongs to the dethiobiotin synthetase family. As to quaternary structure, homodimer. The cofactor is Mg(2+).

Its subcellular location is the cytoplasm. It catalyses the reaction (7R,8S)-7,8-diammoniononanoate + CO2 + ATP = (4R,5S)-dethiobiotin + ADP + phosphate + 3 H(+). It functions in the pathway cofactor biosynthesis; biotin biosynthesis; biotin from 7,8-diaminononanoate: step 1/2. Catalyzes a mechanistically unusual reaction, the ATP-dependent insertion of CO2 between the N7 and N8 nitrogen atoms of 7,8-diaminopelargonic acid (DAPA, also called 7,8-diammoniononanoate) to form a ureido ring. The sequence is that of ATP-dependent dethiobiotin synthetase BioD 2 from Escherichia coli O157:H7.